We begin with the raw amino-acid sequence, 602 residues long: Sodium- and chloride-dependent GABA transporter 2 (602 aa).

The span at 1–13 (MDSRVSGTTSNGE) shows a compositional bias: polar residues. A disordered region spans residues 1 to 22 (MDSRVSGTTSNGETKPVYPVME). Topologically, residues 1 to 40 (MDSRVSGTTSNGETKPVYPVMEKKEEDGTLERGHWNNKME) are cytoplasmic. The next 3 helical transmembrane spans lie at 41–61 (FVLS…FPYL), 68–88 (GAFF…VFLL), and 121–141 (IVIL…FYLF). The Extracellular portion of the chain corresponds to 142–206 (SSFTIDLPWG…GIQHLGALRW (65 aa)). Cys-153 and Cys-162 are disulfide-bonded. An N-linked (GlcNAc...) asparagine glycan is attached at Asn-173. The next 2 membrane-spanning stretches (helical) occupy residues 207 to 227 (ELAL…WKGV) and 233 to 253 (VVYF…IRGV). N-linked (GlcNAc...) asparagine glycosylation is present at Asn-269. Transmembrane regions (helical) follow at residues 282 to 302 (AGTQ…ALGS), 319 to 339 (FLNS…LGFM), 366 to 386 (VVML…VVLL), 418 to 438 (VLIL…LTEG), 453 to 473 (GMCL…VYGA), 490 to 510 (PLIK…TFLF), and 528 to 548 (WWGD…IPAW). Over 549–602 (SLYRLGTLKGPFRERIRQLMCPAEDLPQRNPAGPSAPATPRTSLLRLTELESHC) the chain is Cytoplasmic. Thr-587 is modified (phosphothreonine). Ser-591 is subject to Phosphoserine.

This sequence belongs to the sodium:neurotransmitter symporter (SNF) (TC 2.A.22) family. SLC6A13 subfamily. As to expression, expressed in brain, kidney, lung, liver and testis.

The protein localises to the cell membrane. The protein resides in the basolateral cell membrane. It carries out the reaction 4-aminobutanoate(out) + chloride(out) + 2 Na(+)(out) = 4-aminobutanoate(in) + chloride(in) + 2 Na(+)(in). The catalysed reaction is taurine(out) + chloride(out) + 2 Na(+)(out) = taurine(in) + chloride(in) + 2 Na(+)(in). It catalyses the reaction beta-alanine(out) + chloride(out) + 2 Na(+)(out) = beta-alanine(in) + chloride(in) + 2 Na(+)(in). The enzyme catalyses hypotaurine(out) + chloride(out) + 2 Na(+)(out) = hypotaurine(in) + chloride(in) + 2 Na(+)(in). GABA transport is inhibited by beta-alanine, 2,3-diaminopropionic acid and SNAP-5114. In terms of biological role, mediates sodium- and chloride-dependent transport of gamma-aminobutyric acid (GABA). Mediates transport of beta-alanine. Can also mediate transport of taurine and hypotaurine. This is Sodium- and chloride-dependent GABA transporter 2 (SLC6A13) from Homo sapiens (Human).